A 257-amino-acid chain; its full sequence is UPF0246 protein Mpe_A2092 (257 aa).

This sequence belongs to the UPF0246 family.

This chain is UPF0246 protein Mpe_A2092, found in Methylibium petroleiphilum (strain ATCC BAA-1232 / LMG 22953 / PM1).